Here is a 643-residue protein sequence, read N- to C-terminus: Phosphatidylinositol-3,5-bisphosphate 3-phosphatase MTMR2 (643 aa).

2 stretches are compositionally biased toward polar residues: residues 1–12 (MEKSSSCESLGS) and 23–40 (DSLS…VHTK). The disordered stretch occupies residues 1-56 (MEKSSSCESLGSQPAAARPPSVDSLSSASTSHSENSVHTKSASVVSSDSISTSADN). Phosphoserine occurs at positions 6 and 9. Low complexity predominate over residues 41–55 (SASVVSSDSISTSAD). At serine 58 the chain carries Phosphoserine. The GRAM domain maps to 68 to 139 (NKLAEMEEPP…GVINRVEKIG (72 aa)). Residues 205–580 (GWKLYDPLLE…RHLELWVGYY (376 aa)) enclose the Myotubularin phosphatase domain. A 1,2-diacyl-sn-glycero-3-phospho-(1D-myo-inositol-3,5-bisphosphate) is bound by residues asparagine 330, asparagine 355, and isoleucine 356. A 1,2-diacyl-sn-glycero-3-phospho-(1D-myo-inositol-3-phosphate) is bound by residues asparagine 330, asparagine 355, and isoleucine 356. Cysteine 417 serves as the catalytic Phosphocysteine intermediate. Positions 418, 419, 420, 421, 422, 423, 459, and 463 each coordinate a 1,2-diacyl-sn-glycero-3-phospho-(1D-myo-inositol-3,5-bisphosphate). Positions 418, 419, 420, 421, 422, and 423 each coordinate a 1,2-diacyl-sn-glycero-3-phospho-(1D-myo-inositol-3-phosphate). Arginine 463 serves as a coordination point for a 1,2-diacyl-sn-glycero-3-phospho-(1D-myo-inositol-3-phosphate). Positions 593-627 (IHNRYKELLAKRAELQKKVEELQREISNRSTSSSE) form a coiled coil. The segment at 615–643 (QREISNRSTSSSERASSPAQCVTPVQTVV) is disordered. Low complexity predominate over residues 620-631 (NRSTSSSERASS). The span at 632–643 (PAQCVTPVQTVV) shows a compositional bias: polar residues.

This sequence belongs to the protein-tyrosine phosphatase family. Non-receptor class myotubularin subfamily. As to quaternary structure, homodimer (via coiled-coil domain). Heterotetramer consisting of one MTMR2 dimer and one SBF2/MTMR13 dimer; specifically in peripheral nerves stabilizes SBF2/MTMR13 at the membranes and increases MTMR2 catalytic activity towards phosphatidylinositol 3,5-bisphosphate and to a lesser extent towards phosphatidylinositol 3-phosphate. Heterodimer with SBF1/MTMR5; acts as an adapter for the phosphatase MTMR2 to regulate MTMR2 catalytic activity and subcellular location. Heterodimer with MTMR12. Phosphorylation at Ser-58 decreases MTMR2 localization to endocytic vesicular structures.

The protein localises to the cytoplasm. The protein resides in the early endosome membrane. It is found in the perinuclear region. Its subcellular location is the cell projection. It localises to the axon. The protein localises to the endosome membrane. It catalyses the reaction a 1,2-diacyl-sn-glycero-3-phospho-(1D-myo-inositol-3,5-bisphosphate) + H2O = a 1,2-diacyl-sn-glycero-3-phospho-(1D-myo-inositol-5-phosphate) + phosphate. The enzyme catalyses a 1,2-diacyl-sn-glycero-3-phospho-(1D-myo-inositol-3-phosphate) + H2O = a 1,2-diacyl-sn-glycero-3-phospho-(1D-myo-inositol) + phosphate. It carries out the reaction 1,2-dioctanoyl-sn-glycero-3-phospho-(1-D-myo-inositol-3-phosphate) + H2O = 1,2-dioctanoyl-sn-glycero-3-phospho-(1D-myo-inositol) + phosphate. The catalysed reaction is 1,2-dioctanoyl-sn-glycero-3-phospho-(1D-myo-inositol-3,5-bisphosphate) + H2O = 1,2-dioctanoyl-sn-glycero-3-phospho-(1D-myo-inositol-5-phosphate) + phosphate. Lipid phosphatase that specifically dephosphorylates the D-3 position of phosphatidylinositol 3-phosphate and phosphatidylinositol 3,5-bisphosphate, generating phosphatidylinositol and phosphatidylinositol 5-phosphate. Regulates the level of these phosphoinositides critical for various biological processes including autophagy initiation and autophagosome maturation. In Pongo abelii (Sumatran orangutan), this protein is Phosphatidylinositol-3,5-bisphosphate 3-phosphatase MTMR2.